The sequence spans 5900 residues: Midasin (5900 aa).

Residues 250–270 (GSSVKSKKGGEQQQEGEGEDE) are disordered. AAA-ATPase protomer regions lie at residues 278–583 (TNTV…LRKQ), 673–1012 (EKIS…ALNY), 1101–1346 (PIIP…IAGY), 1411–1721 (IVWT…MDKQ), 1840–2089 (RGMQ…HVLT), and 2167–2451 (LENI…EIYM). Residues 302–309 (GVTGSGKT) and 689–696 (GETGTGKT) each bind ATP. The interval 796–826 (QTTTNNTKENNNNNNNNNNNNNNNNNNKKRT) is disordered. The span at 797 to 821 (TTTNNTKENNNNNNNNNNNNNNNNN) shows a compositional bias: low complexity. Residues 1135–1142 (GPTSSGKT), 1438–1445 (GETGCSKT), 1852–1859 (GSPGVGKT), and 2184–2191 (GPTSTSKT) each bind ATP. The interval 2562–4965 (ESAIKSILCE…EGKGKKDVSD (2404 aa)) is linker. A disordered region spans residues 4932-5598 (GDDGEGGEGG…SVEEKKLTRE (667 aa)). Residues 4984–5008 (KDEDEDEEKEEKDEDEGFDMQDDFE) are compositionally biased toward acidic residues. Over residues 5009-5055 (GEMHDIKKDENKDEDKKDDPNNEKENDKEMGDLEKPEDNVVDEKLWD) the composition is skewed to basic and acidic residues. Acidic residues predominate over residues 5056–5076 (EQDVQDEEEQDEEGKGDETNS). Positions 5079–5113 (MMAKQDGKDDNDDDKKDDDKKDDKKKKKEENGKPD) are enriched in basic and acidic residues. Composition is skewed to acidic residues over residues 5114–5130 (ENEE…EDGK) and 5139–5156 (GASD…DDVI). Residues 5159 to 5173 (EQEKEENHGDPRGDD) show a composition bias toward basic and acidic residues. Residues 5174–5199 (QMEIPEDLELEDPDEGKEDDEQQDGG) are compositionally biased toward acidic residues. Residues 5213-5224 (DVSKEEEKKKEL) show a composition bias toward basic and acidic residues. 2 stretches are compositionally biased toward acidic residues: residues 5225–5255 (DGDE…EDKE) and 5273–5286 (EGDE…EEDQ). The segment covering 5297–5313 (ETPKDSEQPLGVKDKTG) has biased composition (basic and acidic residues). The segment covering 5339–5349 (GMTQPTPSEND) has biased composition (polar residues). Residues 5410-5442 (SEPKEKAPKQDPNAKENENQDYEFIKDDEKLDK) are compositionally biased toward basic and acidic residues. Positions 5448–5460 (QALAAATDTQLQD) are enriched in low complexity. The span at 5469–5487 (DQAEQEEDQMDIDEEDDMD) shows a compositional bias: acidic residues. Basic and acidic residues-rich tracts occupy residues 5488–5536 (VDHK…KDQQ) and 5551–5570 (QFTK…KAVL). Positions 5571 to 5590 (DDGDDQEMEQDGDQDDEESV) are enriched in acidic residues. In terms of domain architecture, VWFA spans 5696–5889 (QVLLAIDDTE…NIPSILSDTL (194 aa)).

This sequence belongs to the midasin family. Associates with pre-60S ribosomes in the nucleoplasm.

Its subcellular location is the nucleus. It localises to the nucleolus. It is found in the nucleoplasm. In terms of biological role, nuclear chaperone required for maturation and nuclear export of pre-60S ribosome subunits. Functions at successive maturation steps to remove ribosomal factors at critical transition points, first driving the exit of early pre-60S particles from the nucleolus and then driving late pre-60S particles from the nucleus. In Dictyostelium discoideum (Social amoeba), this protein is Midasin (mdn1).